A 393-amino-acid chain; its full sequence is Glycerol-3-phosphate dehydrogenase [NAD(+)] 1 (393 aa).

Residues 45–50 (GSGNWG), Phe133, Lys157, and Ala190 contribute to the NAD(+) site. Residue Lys157 coordinates substrate. Lys250 functions as the Proton acceptor in the catalytic mechanism. NAD(+) is bound by residues Arg316 and Gln345. Position 316–317 (316–317 (RN)) interacts with substrate.

This sequence belongs to the NAD-dependent glycerol-3-phosphate dehydrogenase family.

It carries out the reaction sn-glycerol 3-phosphate + NAD(+) = dihydroxyacetone phosphate + NADH + H(+). This is Glycerol-3-phosphate dehydrogenase [NAD(+)] 1 (gpd1) from Cyberlindnera jadinii (Torula yeast).